The sequence spans 68 residues: Large ribosomal subunit protein bL31 (68 aa).

Belongs to the bacterial ribosomal protein bL31 family. Type A subfamily. In terms of assembly, part of the 50S ribosomal subunit.

Functionally, binds the 23S rRNA. The sequence is that of Large ribosomal subunit protein bL31 from Helicobacter hepaticus (strain ATCC 51449 / 3B1).